The following is a 418-amino-acid chain: Serine hydroxymethyltransferase (418 aa).

(6S)-5,6,7,8-tetrahydrofolate-binding positions include Leu-121 and 125–127; that span reads GHL. Lys-230 is modified (N6-(pyridoxal phosphate)lysine). 355-357 lines the (6S)-5,6,7,8-tetrahydrofolate pocket; that stretch reads SPF.

Belongs to the SHMT family. As to quaternary structure, homodimer. The cofactor is pyridoxal 5'-phosphate.

It localises to the cytoplasm. The catalysed reaction is (6R)-5,10-methylene-5,6,7,8-tetrahydrofolate + glycine + H2O = (6S)-5,6,7,8-tetrahydrofolate + L-serine. Its pathway is one-carbon metabolism; tetrahydrofolate interconversion. The protein operates within amino-acid biosynthesis; glycine biosynthesis; glycine from L-serine: step 1/1. Catalyzes the reversible interconversion of serine and glycine with tetrahydrofolate (THF) serving as the one-carbon carrier. This reaction serves as the major source of one-carbon groups required for the biosynthesis of purines, thymidylate, methionine, and other important biomolecules. Also exhibits THF-independent aldolase activity toward beta-hydroxyamino acids, producing glycine and aldehydes, via a retro-aldol mechanism. The protein is Serine hydroxymethyltransferase of Streptococcus pyogenes serotype M18 (strain MGAS8232).